Reading from the N-terminus, the 915-residue chain is Coronin-7 (915 aa).

WD repeat units lie at residues 75–115 (CHSD…QALP), 124–163 (PEDAQVEVLQFHPTADGVLLSAAGRAVKVWDATKQQPLTE), 166–205 (THGDLVQGAAWSRDGALLGTTCKDKQLRIFDPRAKPEAAQ), and 209–253 (AHEN…AALT). Residues 396–456 (TSCLAPPAEL…TSPSQRSLQS (61 aa)) are disordered. Composition is skewed to low complexity over residues 399-413 (LAPPAELTPATAQPA) and 420-450 (SSTPSSLTSPSTPSSLGPSLTSTSGIGTSPS). Phosphoserine is present on residues serine 453 and serine 456. A Glycyl lysine isopeptide (Lys-Gly) (interchain with G-Cter in ubiquitin) cross-link involves residue lysine 463. WD repeat units follow at residues 533–573 (QNGV…LQEV), 583–623 (GHTE…EQLR), 626–665 (GHRDQIFGLAWSPDGQQLATVCKDGRLRIYEPRGSPEPLQ), and 719–759 (DVAP…PFFL). The tract at residues 850–915 (PPGMTPVSQA…FEGVDEDEWD (66 aa)) is disordered. Over residues 859-869 (APREAPARRAP) the composition is skewed to low complexity. Residues 874–886 (LEEKSDQQKKEEL) are compositionally biased toward basic and acidic residues. Position 905 is a phosphoserine (serine 905).

This sequence belongs to the WD repeat coronin family. Interacts with clathrin adapter AP1 complex. This interaction takes place at Golgi membranes and not AP1-positive endosomal membranes. Interacts (when ubiquitinated at Lys-463) with EPS15. In terms of processing, the membrane-associated form is phosphorylated on tyrosine residues. Ubiquitinated via 'Lys-33'-linked ubiquitin chains by the BCR(KLHL20) E3 ubiquitin ligase complex: 'Lys-33'-linked ubiquitination promotes interaction with EPS15 and facilitates actin polymerization at the trans-Golgi network, thereby facilitating post-Golgi trafficking. Deubiquitinated by ZRANB1/TRABID.

It is found in the golgi apparatus membrane. The protein resides in the golgi apparatus. Its subcellular location is the trans-Golgi network. It localises to the cytoplasmic vesicle. The protein localises to the cytoplasm. It is found in the cytosol. F-actin regulator involved in anterograde Golgi to endosome transport: upon ubiquitination via 'Lys-33'-linked ubiquitin chains by the BCR(KLHL20) E3 ubiquitin ligase complex, interacts with EPS15 and localizes to the trans-Golgi network, where it promotes actin polymerization, thereby facilitating post-Golgi trafficking. May play a role in the maintenance of the Golgi apparatus morphology. The polypeptide is Coronin-7 (CORO7) (Bos taurus (Bovine)).